The following is an 891-amino-acid chain: Major core protein 4a precursor (891 aa).

The protein belongs to the poxviridae protein P4a family. Interacts with P39/A4.

It localises to the virion. Functionally, core protein 4a is the most abundant virion protein. Major component of the virion core that undergoes proteolytic processing during the immature virion (IV) to mature virion (MV) transition. The chain is Major core protein 4a precursor from Fowlpox virus (strain NVSL) (FPV).